Reading from the N-terminus, the 476-residue chain is ATP synthase subunit beta (476 aa).

154 to 161 serves as a coordination point for ATP; it reads GGAGVGKT.

Belongs to the ATPase alpha/beta chains family. F-type ATPases have 2 components, CF(1) - the catalytic core - and CF(0) - the membrane proton channel. CF(1) has five subunits: alpha(3), beta(3), gamma(1), delta(1), epsilon(1). CF(0) has four main subunits: a(1), b(1), b'(1) and c(9-12).

It localises to the cell inner membrane. The enzyme catalyses ATP + H2O + 4 H(+)(in) = ADP + phosphate + 5 H(+)(out). Produces ATP from ADP in the presence of a proton gradient across the membrane. The catalytic sites are hosted primarily by the beta subunits. This chain is ATP synthase subunit beta, found in Rhodopseudomonas palustris (strain HaA2).